A 393-amino-acid polypeptide reads, in one-letter code: Iripin-3 (393 aa).

Positions 1–16 are cleaved as a signal peptide; that stretch reads MKVITAFLSVFVLCSA. N104 and N265 each carry an N-linked (GlcNAc...) asparagine glycan.

This sequence belongs to the serpin family. As to quaternary structure, interacts with human KLKB1. Interacts with human ST14. Interacts with human F2 (thrombin). Saliva (at protein level). Expressed in salivary gland. Expressed in ovary during blood feeding.

It localises to the secreted. Its function is as follows. Serine protease inhibitor that modulates blood feeding of ticks on vertebrate species. Moderately inhibits host plasma kallikrein (KLKB1), matriptase (ST14), trypsin, plasmin (PLG), thrombin (F2) and coagulation factor VIIa (F7). Slightly inhibits host alpha-chymotrypsin, tPA/tissue-type plasminogen activator (PLAT), uPA/urokinase-type plasminogen activator (PLAU) and coagulation factor XIIa (F12). Slightly inhibits the extrinsic pathway while not affecting the intrinsic and common pathways of host blood coagulation. Decreases synthesis and secretion of IL6 by mouse bone marrow-derived macrophages. Decreases viability of mouse B- and T-cells. Decreases proliferation of mouse CD4+ T-cells in response to stimulation. Inhibits Th1 immune responses in mouse cells. Promotes differentiation of mouse regulatory T-cells. This chain is Iripin-3, found in Ixodes ricinus (Common tick).